The primary structure comprises 51 residues: Large ribosomal subunit protein bL33 (51 aa).

The segment at M1–K23 is disordered. A compositionally biased stretch (polar residues) spans S10–T20.

This sequence belongs to the bacterial ribosomal protein bL33 family.

The chain is Large ribosomal subunit protein bL33 from Methylobacillus flagellatus (strain ATCC 51484 / DSM 6875 / VKM B-1610 / KT).